The sequence spans 483 residues: PAT complex subunit CCDC47 (483 aa).

The first 20 residues, 1–20, serve as a signal peptide directing secretion; that stretch reads MKAFHTFCVVLLVFGSVSEA. Over 21-135 the chain is Cytoplasmic; that stretch reads KFDDFEDEED…PAHLQNSWES (115 aa). The segment at 46-118 is disordered; it reads MEDSVTESPQ…PDTSSSKNKD (73 aa). Acidic residues predominate over residues 60–104; the sequence is TEDDEDETTVELEGQDENQEGDFEDADTQEGDTESEPYDDEEFEG. Residues 105-118 are compositionally biased toward basic and acidic residues; that stretch reads YEDKPDTSSSKNKD. The chain crosses the membrane as a helical span at residues 136–155; the sequence is YYLEILMVTGLLAYIMNYII. Residues 156–483 are Lumenal-facing; that stretch reads GKNKNSRLAQ…KMKQIKVKAM (328 aa). A glycan (N-linked (GlcNAc...) asparagine) is linked at N178. The segment at 424–483 is disordered; the sequence is QRQEAAQSRREEKKRAEKERIMNEEDPEKQRRLEEAALRRDQKKLEKKQMKMKQIKVKAM. A compositionally biased stretch (basic and acidic residues) spans 430–472; the sequence is QSRREEKKRAEKERIMNEEDPEKQRRLEEAALRRDQKKLEKKQ. Residues 451-481 are a coiled coil; the sequence is EKQRRLEEAALRRDQKKLEKKQMKMKQIKVK. Over residues 473-483 the composition is skewed to basic residues; it reads MKMKQIKVKAM.

It belongs to the CCDC47 family. As to quaternary structure, component of the PAT complex, composed of WDR83OS/Asterix and CCDC47. The PAT complex is part of the multi-pass translocon (MPT) complex, composed of three subcomplexes, the GEL complex (composed of RAB5IF/OPTI and TMCO1), the BOS complex (composed of NCLN/Nicalin, NOMO1 and TMEM147) and the PAT complex (composed of WDR83OS/Asterix and CCDC47). The MPT complex associates with the SEC61 complex. Interacts with VCP, HSPA5, DERL1, DERL2 and SELENOS.

The protein localises to the endoplasmic reticulum membrane. It localises to the rough endoplasmic reticulum membrane. Component of the multi-pass translocon (MPT) complex that mediates insertion of multi-pass membrane proteins into the lipid bilayer of membranes. The MPT complex takes over after the SEC61 complex: following membrane insertion of the first few transmembrane segments of proteins by the SEC61 complex, the MPT complex occludes the lateral gate of the SEC61 complex to promote insertion of subsequent transmembrane regions. Within the MPT complex, the PAT subcomplex sequesters any highly polar regions in the transmembrane domains away from the non-polar membrane environment until they can be buried in the interior of the fully assembled protein. Within the PAT subcomplex, CCDC47 occludes the lateral gate of the SEC61 complex. Involved in the regulation of calcium ion homeostasis in the ER. Required for proper protein degradation via the ERAD (ER-associated degradation) pathway. Has an essential role in the maintenance of ER organization during embryogenesis. This is PAT complex subunit CCDC47 (CCDC47) from Pongo abelii (Sumatran orangutan).